Consider the following 275-residue polypeptide: NH(3)-dependent NAD(+) synthetase (275 aa).

An ATP-binding site is contributed by 47-54; sequence GISGGQDS. Residue aspartate 53 coordinates Mg(2+). Arginine 141 is a binding site for deamido-NAD(+). Residue threonine 161 coordinates ATP. Position 166 (glutamate 166) interacts with Mg(2+). Positions 174 and 181 each coordinate deamido-NAD(+). ATP contacts are provided by lysine 190 and threonine 212. 261 to 262 contributes to the deamido-NAD(+) binding site; the sequence is HK.

This sequence belongs to the NAD synthetase family. Homodimer.

The enzyme catalyses deamido-NAD(+) + NH4(+) + ATP = AMP + diphosphate + NAD(+) + H(+). It participates in cofactor biosynthesis; NAD(+) biosynthesis; NAD(+) from deamido-NAD(+) (ammonia route): step 1/1. Its function is as follows. Catalyzes the ATP-dependent amidation of deamido-NAD to form NAD. Uses ammonia as a nitrogen source. The chain is NH(3)-dependent NAD(+) synthetase from Lactiplantibacillus plantarum (strain ATCC BAA-793 / NCIMB 8826 / WCFS1) (Lactobacillus plantarum).